A 277-amino-acid chain; its full sequence is Bifunctional protein FolD (277 aa).

NADP(+) contacts are provided by residues Gly-160–Ser-162, Ser-185, and Ile-226.

It belongs to the tetrahydrofolate dehydrogenase/cyclohydrolase family. Homodimer.

The catalysed reaction is (6R)-5,10-methylene-5,6,7,8-tetrahydrofolate + NADP(+) = (6R)-5,10-methenyltetrahydrofolate + NADPH. The enzyme catalyses (6R)-5,10-methenyltetrahydrofolate + H2O = (6R)-10-formyltetrahydrofolate + H(+). Its pathway is one-carbon metabolism; tetrahydrofolate interconversion. Its function is as follows. Catalyzes the oxidation of 5,10-methylenetetrahydrofolate to 5,10-methenyltetrahydrofolate and then the hydrolysis of 5,10-methenyltetrahydrofolate to 10-formyltetrahydrofolate. This Vesicomyosocius okutanii subsp. Calyptogena okutanii (strain HA) protein is Bifunctional protein FolD.